The following is a 239-amino-acid chain: Nicotinamide riboside transporter PnuC (239 aa).

Residues 1–21 (MDFFSVQNILVHIPIGAGGYD) lie on the Cytoplasmic side of the membrane. The helical transmembrane segment at 22–42 (LSWIEAVGTIAGLLCIGLASL) threads the bilayer. Over 43–48 (EKISNY) the chain is Periplasmic. A helical transmembrane segment spans residues 49 to 68 (FFGLINVTLFGIIFFQIQLY). Over 69 to 71 (ASL) the chain is Cytoplasmic. A helical transmembrane segment spans residues 72 to 89 (LLQVFFFAANIYGWYAWS). Topologically, residues 90–109 (RQTSQNEAELKIRWLPLPKA) are periplasmic. Residues 110–127 (LSWLAVCVVSIGLMTVFI) traverse the membrane as a helical segment. The Cytoplasmic segment spans residues 128–157 (NPVFAFLTRVAVMIMQALGLQVVMPELQPD). A helical transmembrane segment spans residues 158-177 (AFPFWDSCMMVLSIVAMILM). The Periplasmic segment spans residues 178 to 183 (TRKYVE). The helical transmembrane segment at 184–206 (NWLLWVIINVISVVIFALQGVYA) threads the bilayer. Residues W188 and N192 each contribute to the beta-nicotinamide D-riboside site. Over 207–239 (MSLEYIILTFIALNGSRMWINSARERGSRALSH) the chain is Cytoplasmic.

The protein belongs to the nicotinamide ribonucleoside (NR) uptake permease (TC 4.B.1) family.

The protein localises to the cell inner membrane. Its function is as follows. Required for nicotinamide riboside transport across the inner membrane. This chain is Nicotinamide riboside transporter PnuC (pnuC), found in Escherichia coli (strain K12).